A 181-amino-acid polypeptide reads, in one-letter code: MRVVLLGPPGAGKGTQAVLLSEKLGVPHISTGDLFRANISQQTPLGREAQKYMDAGDLVPSDVTNRMVEARVNEPDAANGFVLDGYPRTVDQADALEKILGDMNSKLDAVLCFVVPEDTVVERMLARGRNDDTEDVIRNRMRVYREETEPLLDHYDGLVVTVDGVGEVDEVNERALRALGR.

Position 10 to 15 (10 to 15 (GAGKGT)) interacts with ATP. The NMP stretch occupies residues 30–59 (STGDLFRANISQQTPLGREAQKYMDAGDLV). AMP is bound by residues Thr31, Arg36, 57–59 (DLV), 85–88 (GYPR), and Gln92. The tract at residues 126–132 (ARGRNDD) is LID. Residue Arg127 coordinates ATP. The AMP site is built by Arg129 and Arg140. Residue Gly166 participates in ATP binding.

Belongs to the adenylate kinase family. As to quaternary structure, monomer.

It is found in the cytoplasm. It carries out the reaction AMP + ATP = 2 ADP. Its pathway is purine metabolism; AMP biosynthesis via salvage pathway; AMP from ADP: step 1/1. In terms of biological role, catalyzes the reversible transfer of the terminal phosphate group between ATP and AMP. Plays an important role in cellular energy homeostasis and in adenine nucleotide metabolism. This chain is Adenylate kinase, found in Nocardia farcinica (strain IFM 10152).